The sequence spans 156 residues: Small ribosomal subunit protein uS7 (156 aa).

It belongs to the universal ribosomal protein uS7 family. Part of the 30S ribosomal subunit. Contacts proteins S9 and S11.

One of the primary rRNA binding proteins, it binds directly to 16S rRNA where it nucleates assembly of the head domain of the 30S subunit. Is located at the subunit interface close to the decoding center, probably blocks exit of the E-site tRNA. The protein is Small ribosomal subunit protein uS7 of Synechococcus sp. (strain RCC307).